A 215-amino-acid chain; its full sequence is MSRSGKSLTKYKIVFLGEQGVGKTSLITRFMYDTFDDHYQATIGIDFLSKTMYLDDKTIRLQLWDTAGQERFRSLIPSYIRDSRVAIIVYDITKRKSFEYIDKWIEDVKNERGDENVILCIVGNKSDLSDERQISTEEGEKKAKLLGAKIFMETSTKAGYNVKALFKKIAKSLPEFQNSESTPLDSENANSANQNKPGVIDISTAEEQEQSACQC.

17–24 is a binding site for GTP; sequence GEQGVGKT. Positions 39 to 47 match the Effector region motif; that stretch reads YQATIGIDF. Residues 65–69 and 124–127 each bind GTP; these read DTAGQ and NKSD. Polar residues predominate over residues 178-196; it reads NSESTPLDSENANSANQNK. The disordered stretch occupies residues 178 to 215; the sequence is NSESTPLDSENANSANQNKPGVIDISTAEEQEQSACQC. Residues cysteine 213 and cysteine 215 are each lipidated (S-geranylgeranyl cysteine). Cysteine 215 is subject to Cysteine methyl ester.

Belongs to the small GTPase superfamily. Rab family. As to quaternary structure, interacts with YIF1, YIP3 and YIP4.

It is found in the cell membrane. Functionally, protein transport. Might participate in post-Golgi transport. The sequence is that of GTP-binding protein YPT6 (YPT6) from Saccharomyces cerevisiae (strain ATCC 204508 / S288c) (Baker's yeast).